We begin with the raw amino-acid sequence, 329 residues long: Cytosolic arginine sensor for mTORC1 subunit 1 (329 aa).

Residue Ser-14 is modified to Phosphoserine. ACT domains follow at residues 72 to 138 and 260 to 321; these read AEAT…HTLA and GELW…EVLQ. L-arginine-binding positions include 111-112, Gly-274, 280-281, and 300-304; these read SV, IV, and TFNFD.

The protein belongs to the GATS family. Forms homodimers and heterodimers with CASTOR2. Interacts with the GATOR2 complex which is composed of MIOS, SEC13, SEH1L, WDR24 and WDR59; the interaction is negatively regulated by arginine. Interacts with TM4SF5; the interaction is positively regulated by leucine and is negatively regulated by arginine. Post-translationally, phosphorylation at Ser-14 by AKT1, promoting the interaction between CASTOR1 and RNF167. Ubiquitinated by RNF167 via 'Lys-29'-polyubiquitination, leading to its degradation, releasing the GATOR2 complex. Ubiquitination by RNF167 is promoted by phosphorylation at Ser-14 by AKT1.

It is found in the cytoplasm. The protein localises to the cytosol. Functionally, functions as an intracellular arginine sensor within the amino acid-sensing branch of the TORC1 signaling pathway. As a homodimer or a heterodimer with CASTOR2, binds and inhibits the GATOR subcomplex GATOR2 and thereby mTORC1. Binding of arginine to CASTOR1 allosterically disrupts the interaction of CASTOR1-containing dimers with GATOR2 which can in turn activate mTORC1 and the TORC1 signaling pathway. The sequence is that of Cytosolic arginine sensor for mTORC1 subunit 1 from Pongo abelii (Sumatran orangutan).